Reading from the N-terminus, the 353-residue chain is Fe(3+) ions import ATP-binding protein FbpC 1 (353 aa).

An ABC transporter domain is found at 9 to 239 (VVFRNICKQF…PASAFIADFM (231 aa)). An ATP-binding site is contributed by 41 to 48 (GPSGCGKT).

This sequence belongs to the ABC transporter superfamily. Fe(3+) ion importer (TC 3.A.1.10) family. In terms of assembly, the complex is composed of two ATP-binding proteins (FbpC), two transmembrane proteins (FbpB) and a solute-binding protein (FbpA).

It localises to the cell inner membrane. It catalyses the reaction Fe(3+)(out) + ATP + H2O = Fe(3+)(in) + ADP + phosphate + H(+). Part of the ABC transporter complex FbpABC involved in Fe(3+) ions import. Responsible for energy coupling to the transport system. The sequence is that of Fe(3+) ions import ATP-binding protein FbpC 1 from Rhizobium meliloti (strain 1021) (Ensifer meliloti).